A 130-amino-acid chain; its full sequence is Protein ApaG (130 aa).

Residues 3 to 127 (RAVTRGIEVS…FSLDIPEQRR (125 aa)) form the ApaG domain.

In Brucella anthropi (strain ATCC 49188 / DSM 6882 / CCUG 24695 / JCM 21032 / LMG 3331 / NBRC 15819 / NCTC 12168 / Alc 37) (Ochrobactrum anthropi), this protein is Protein ApaG.